Reading from the N-terminus, the 197-residue chain is LexA repressor (197 aa).

Positions 28–47 (VREIARRFRITPRGALLHLI) form a DNA-binding region, H-T-H motif. Catalysis depends on for autocatalytic cleavage activity residues serine 119 and lysine 156.

This sequence belongs to the peptidase S24 family. As to quaternary structure, homodimer.

The enzyme catalyses Hydrolysis of Ala-|-Gly bond in repressor LexA.. Represses a number of genes involved in the response to DNA damage (SOS response), including recA and lexA. In the presence of single-stranded DNA, RecA interacts with LexA causing an autocatalytic cleavage which disrupts the DNA-binding part of LexA, leading to derepression of the SOS regulon and eventually DNA repair. The chain is LexA repressor from Thermotoga maritima (strain ATCC 43589 / DSM 3109 / JCM 10099 / NBRC 100826 / MSB8).